We begin with the raw amino-acid sequence, 385 residues long: S-adenosylmethionine synthase (385 aa).

Histidine 16 is an ATP binding site. Aspartate 18 serves as a coordination point for Mg(2+). Glutamate 44 contributes to the K(+) binding site. L-methionine is bound by residues glutamate 57 and glutamine 100. The flexible loop stretch occupies residues 100–110; that stretch reads QSPDINQGVDR. ATP is bound by residues 164-166, 230-231, aspartate 239, 245-246, alanine 262, and lysine 266; these read DGK, KF, and RK. Residue aspartate 239 participates in L-methionine binding. Lysine 270 provides a ligand contact to L-methionine.

The protein belongs to the AdoMet synthase family. In terms of assembly, homotetramer; dimer of dimers. It depends on Mg(2+) as a cofactor. The cofactor is K(+).

The protein localises to the cytoplasm. It catalyses the reaction L-methionine + ATP + H2O = S-adenosyl-L-methionine + phosphate + diphosphate. It participates in amino-acid biosynthesis; S-adenosyl-L-methionine biosynthesis; S-adenosyl-L-methionine from L-methionine: step 1/1. Functionally, catalyzes the formation of S-adenosylmethionine (AdoMet) from methionine and ATP. The overall synthetic reaction is composed of two sequential steps, AdoMet formation and the subsequent tripolyphosphate hydrolysis which occurs prior to release of AdoMet from the enzyme. This Helicobacter acinonychis (strain Sheeba) protein is S-adenosylmethionine synthase.